The primary structure comprises 709 residues: DNA helicase/primase complex-associated protein (709 aa).

A disordered region spans residues 141-176; the sequence is SGDDGRDQQPPPVDGFGSEMEGEQTCPHAQRHSESP.

This sequence belongs to the herpesviridae HEPA family. As to quaternary structure, associates with the primase and the helicase to form the helicase-primase complex. Interacts with the origin-binding protein. Interacts with the polymerase catalytic subunit.

It is found in the host nucleus. Functionally, component of the helicase/primase complex. Unwinds the DNA at the replication forks and generates single-stranded DNA for both leading and lagging strand synthesis. The primase synthesizes short RNA primers on the lagging strand that the polymerase presumably elongates using dNTPs. The primase-associated factor has no known catalytic activity in the complex and may serve to facilitate the formation of the replisome by directly interacting with the origin-binding protein and the polymerase. This is DNA helicase/primase complex-associated protein from Epstein-Barr virus (strain B95-8) (HHV-4).